The following is a 327-amino-acid chain: 2-methoxy-6-polyprenyl-1,4-benzoquinol methylase, mitochondrial (327 aa).

Residues 1–49 (MAAPRSCVLWSYCGHGWSRLAGDCRLPGFRRSWLGATLSARSLSQEKRA) constitute a mitochondrion transit peptide. S-adenosyl-L-methionine is bound by residues Thr117, Asp171, and 199-200 (DA).

This sequence belongs to the class I-like SAM-binding methyltransferase superfamily. MenG/UbiE family. In terms of assembly, component of a multi-subunit COQ enzyme complex, composed of at least COQ3, COQ4, COQ5, COQ6, COQ7 and COQ9. Interacts with PYURF; the interaction is direct, stabilizes COQ5 protein and associates PYURF with COQ enzyme complex.

It is found in the mitochondrion inner membrane. It carries out the reaction 2-methoxy-6-(all-trans-decaprenyl)benzene-1,4-diol + S-adenosyl-L-methionine = 5-methoxy-2-methyl-3-(all-trans-decaprenyl)benzene-1,4-diol + S-adenosyl-L-homocysteine + H(+). Its pathway is cofactor biosynthesis; ubiquinone biosynthesis. Functionally, methyltransferase required for the conversion of 2-decaprenyl-6-methoxy-1,4-benzoquinol (DDMQH2) to 2-decaprenyl-3-methyl-6-methoxy-1,4-benzoquinol (DMQH2). The chain is 2-methoxy-6-polyprenyl-1,4-benzoquinol methylase, mitochondrial from Rattus norvegicus (Rat).